Here is a 177-residue protein sequence, read N- to C-terminus: N-acetylmuramoyl-L-alanine amidase A (177 aa).

The N-acetylmuramoyl-L-alanine amidase domain occupies 23 to 158; the sequence is QTSAVIMHTM…SGNENRYDPG (136 aa). Cys-114 and Cys-121 form a disulfide bridge.

The protein resides in the secreted. The enzyme catalyses Hydrolyzes the link between N-acetylmuramoyl residues and L-amino acid residues in certain cell-wall glycopeptides.. Its function is as follows. Antibacterial activity against Gram-positive bacteria M.luteus, S.aureus, E.faecalis and P.acidilactici and Gram-negative bacterium E.coli. This Achromobacter lyticus protein is N-acetylmuramoyl-L-alanine amidase A (cwhA).